The following is a 355-amino-acid chain: Myosin-binding protein H-like (355 aa).

2 stretches are compositionally biased toward polar residues: residues 1-16 (META…SQRQ) and 31-41 (TSHQQEAGSPS). A disordered region spans residues 1–41 (METATTLEIASCSQRQVEAAADPADAKGPRTSHQQEAGSPS). Residue Ser-39 is modified to Phosphoserine. The Ig-like C2-type 1 domain occupies 46-140 (PSIEEHPKIW…GGLQATATIN (95 aa)). The 96-residue stretch at 149–244 (PPQSIKLVDV…TADLAHIQKA (96 aa)) folds into the Fibronectin type-III domain. The Ig-like C2-type 2 domain maps to 262-346 (PKFTQPLADC…INALGEASVD (85 aa)). Cysteines 283 and 334 form a disulfide. Residue Arg-322 is modified to Omega-N-methylarginine.

This sequence belongs to the immunoglobulin superfamily. MyBP family. As to expression, expressed in the atria as well as in discrete puncta throughout the right ventricular wall and septum.

The protein resides in the cytoplasm. Its subcellular location is the myofibril. It localises to the sarcomere. Myosin-binding protein which plays a role in cardiac function. Seems to regulate conduction in the atria and ventricular conduction systems. This chain is Myosin-binding protein H-like, found in Mus musculus (Mouse).